Consider the following 202-residue polypeptide: MTLWLGPGPLVLASQSRARQALLSNAGIPFDAIPADIDERGIAKASGLSAPGEIAALLAQEKAAFVSNHHPGRLVLGADQTLALGARGFNKPADRNEAAKQLRELAGRRHELHAAIALVRNGVTLFADVSIARMTMRPLNDEEIAAYLDLAGDKATSSVGGYQVEGLGVHLFDGIHGDHFTILGLPLLPLLGFLRSQKLLAF.

Asp79 (proton acceptor) is an active-site residue.

It belongs to the Maf family. Requires a divalent metal cation as cofactor.

Its subcellular location is the cytoplasm. It carries out the reaction a ribonucleoside 5'-triphosphate + H2O = a ribonucleoside 5'-phosphate + diphosphate + H(+). The catalysed reaction is a 2'-deoxyribonucleoside 5'-triphosphate + H2O = a 2'-deoxyribonucleoside 5'-phosphate + diphosphate + H(+). In terms of biological role, nucleoside triphosphate pyrophosphatase. May have a dual role in cell division arrest and in preventing the incorporation of modified nucleotides into cellular nucleic acids. The sequence is that of Nucleoside triphosphate pyrophosphatase from Rhodopseudomonas palustris (strain HaA2).